A 415-amino-acid polypeptide reads, in one-letter code: MSLKRPLSEVDPEIFRAIELETQRQRNTLELIASENVASRAVMEAQGSVLTNKYAEGYPGRRYYGGCEFVDIAEDLAISRAKELFGAGFANVQPHSGAQANTAVYFALLNPGDTIMGMDLAHGGHLTHGSPVNISGRYFKFTFYGVEKETGRINYEKMFSIAFEHKPRMIVAGASAYPRAIDFYKIKEIAAEVGAYLMVDMAHIAGLVAAGLHMSPVPYADVVTTTTHKTLRGPRGGLILCKDAERYGTKINRAVFPGVQGGPLMHVIAAKAVAFKEAMEPGFKEYQRKIVSNARALADALLERGFELVSGGTDNHLILVDLRSKKITGREAQELFDAVGVTVNKNAVPFDPQPPNIASGIRIGTPAVTSRGLNEDDMVQIAEIMDYAIEHRDDRGKLEKARAKVDEICARYPLY.

(6S)-5,6,7,8-tetrahydrofolate is bound by residues L120 and 124-126; that span reads GHL. K229 carries the post-translational modification N6-(pyridoxal phosphate)lysine.

Belongs to the SHMT family. As to quaternary structure, homodimer. It depends on pyridoxal 5'-phosphate as a cofactor.

It localises to the cytoplasm. It catalyses the reaction (6R)-5,10-methylene-5,6,7,8-tetrahydrofolate + glycine + H2O = (6S)-5,6,7,8-tetrahydrofolate + L-serine. It participates in one-carbon metabolism; tetrahydrofolate interconversion. The protein operates within amino-acid biosynthesis; glycine biosynthesis; glycine from L-serine: step 1/1. Catalyzes the reversible interconversion of serine and glycine with tetrahydrofolate (THF) serving as the one-carbon carrier. This reaction serves as the major source of one-carbon groups required for the biosynthesis of purines, thymidylate, methionine, and other important biomolecules. Also exhibits THF-independent aldolase activity toward beta-hydroxyamino acids, producing glycine and aldehydes, via a retro-aldol mechanism. The chain is Serine hydroxymethyltransferase from Pelotomaculum thermopropionicum (strain DSM 13744 / JCM 10971 / SI).